A 279-amino-acid chain; its full sequence is Presqualene diphosphate synthase (279 aa).

The protein belongs to the phytoene/squalene synthase family. HpnD subfamily.

It carries out the reaction 2 (2E,6E)-farnesyl diphosphate = presqualene diphosphate + diphosphate. It functions in the pathway secondary metabolite biosynthesis; hopanoid biosynthesis. Functionally, involved in the biosynthesis of the hopanoid precursor squalene (SQ) from farnesyl diphosphate (FPP). Catalyzes the first step, the formation of presqualene diphosphate (PSPP) from two molecules of FPP. The protein is Presqualene diphosphate synthase of Rhodopseudomonas palustris (strain ATCC BAA-98 / CGA009).